A 160-amino-acid chain; its full sequence is GPI-anchored protein LLG3 (160 aa).

A signal peptide spans 1–23; the sequence is MKITHHCLVSLLSILLLSGFAFS. An N-linked (GlcNAc...) asparagine glycan is attached at N56. Residue S137 is the site of GPI-anchor amidated serine attachment. Residues 138 to 160 constitute a propeptide, removed in mature form; sequence HASIPLVSTHVLLITVSILFHLF.

Expressed in pollen, pollen tubes, sporophytic pistil tissues, in the early stages of female gametophyte development, and in unfertilized, mature ovules.

The protein localises to the cell membrane. The sequence is that of GPI-anchored protein LLG3 from Arabidopsis thaliana (Mouse-ear cress).